We begin with the raw amino-acid sequence, 409 residues long: Arginine biosynthesis bifunctional protein ArgJ (409 aa).

The substrate site is built by Thr156, Lys182, Thr193, Glu280, Asn404, and Ser409. Thr193 functions as the Nucleophile in the catalytic mechanism.

Belongs to the ArgJ family. As to quaternary structure, heterotetramer of two alpha and two beta chains.

It is found in the cytoplasm. It carries out the reaction N(2)-acetyl-L-ornithine + L-glutamate = N-acetyl-L-glutamate + L-ornithine. It catalyses the reaction L-glutamate + acetyl-CoA = N-acetyl-L-glutamate + CoA + H(+). It functions in the pathway amino-acid biosynthesis; L-arginine biosynthesis; L-ornithine and N-acetyl-L-glutamate from L-glutamate and N(2)-acetyl-L-ornithine (cyclic): step 1/1. It participates in amino-acid biosynthesis; L-arginine biosynthesis; N(2)-acetyl-L-ornithine from L-glutamate: step 1/4. Its function is as follows. Catalyzes two activities which are involved in the cyclic version of arginine biosynthesis: the synthesis of N-acetylglutamate from glutamate and acetyl-CoA as the acetyl donor, and of ornithine by transacetylation between N(2)-acetylornithine and glutamate. The sequence is that of Arginine biosynthesis bifunctional protein ArgJ from Nitrosomonas europaea (strain ATCC 19718 / CIP 103999 / KCTC 2705 / NBRC 14298).